We begin with the raw amino-acid sequence, 241 residues long: Nuclear receptor-interacting protein 3 (241 aa).

This is Nuclear receptor-interacting protein 3 (NRIP3) from Homo sapiens (Human).